Reading from the N-terminus, the 333-residue chain is MNKIHAVITGIGGYVPEYKLTNEEISTMVDTSDEWILKRIGIKERRILKPEEGKGITYLALKAIEDLKSRHDFDPLEIDAVLFATATPDYPFPNSASLIAHKVGITNAFGFDMEAACSGFIYALEVAQGFIVSGKHKKVMIIAGDVLSVFIDYSDRNTSPIFGDGCGCALVEATMEDIGLVDSIMRCDGSIPESLHVYGGGSVNPTTYETINNKLHYVWQDGKVVFRHAVSNMADTCQKLISKNNLSKDEIDWVVPHQANLRIIDAVTNHLKISRERVMINIEKYGNTGAASIPLCLCEWESKLHKGDKMIFTAFGAGFTWGATYLKWGYDSH.

Catalysis depends on residues cysteine 117 and histidine 257. An ACP-binding region spans residues 258–262; it reads QANLR. The active site involves asparagine 287.

It belongs to the thiolase-like superfamily. FabH family. Homodimer.

The protein localises to the cytoplasm. The enzyme catalyses malonyl-[ACP] + acetyl-CoA + H(+) = 3-oxobutanoyl-[ACP] + CO2 + CoA. It functions in the pathway lipid metabolism; fatty acid biosynthesis. Functionally, catalyzes the condensation reaction of fatty acid synthesis by the addition to an acyl acceptor of two carbons from malonyl-ACP. Catalyzes the first condensation reaction which initiates fatty acid synthesis and may therefore play a role in governing the total rate of fatty acid production. Possesses both acetoacetyl-ACP synthase and acetyl transacylase activities. Its substrate specificity determines the biosynthesis of branched-chain and/or straight-chain of fatty acids. The sequence is that of Beta-ketoacyl-[acyl-carrier-protein] synthase III from Azobacteroides pseudotrichonymphae genomovar. CFP2.